The sequence spans 702 residues: Polyribonucleotide nucleotidyltransferase (702 aa).

The Mg(2+) site is built by D484 and D490. The region spanning 551-610 is the KH domain; sequence PHIESFKIAVEKIGALIGPGGKTVKSLSDQYRVTINTDSDGTVTVSGRDAQSVFDAKVAV. Residues 620 to 688 form the S1 motif domain; sequence GRVYQGVVKR…RMGRLNLSYI (69 aa).

This sequence belongs to the polyribonucleotide nucleotidyltransferase family. Mg(2+) serves as cofactor.

The protein localises to the cytoplasm. It carries out the reaction RNA(n+1) + phosphate = RNA(n) + a ribonucleoside 5'-diphosphate. In terms of biological role, involved in mRNA degradation. Catalyzes the phosphorolysis of single-stranded polyribonucleotides processively in the 3'- to 5'-direction. This Treponema pallidum (strain Nichols) protein is Polyribonucleotide nucleotidyltransferase.